The primary structure comprises 266 residues: MSDILNKIVAVKREEIAAAQKKIPLAAMRADAESRVLTRDFEGALRAKIAAGQAAVIAEIKKASPSKGVIRENFIPADIAQSYAEGNGKVSAACLSVLTDRQFFQGQPDYLKQARASCALPVLRKDFMVDAYQIYESRAMGADAILLIAACLEDAQMAEFEAIAHSLGMAALVEVHDGAELDRALKLRTPLVGINNRNLRTFEVSLDTTVSLRKAVPSDRLLVAESGILTPQDVKTLRDADVHAFLVGEAFMRAQEPGAALAKLFA.

The protein belongs to the TrpC family.

The enzyme catalyses 1-(2-carboxyphenylamino)-1-deoxy-D-ribulose 5-phosphate + H(+) = (1S,2R)-1-C-(indol-3-yl)glycerol 3-phosphate + CO2 + H2O. Its pathway is amino-acid biosynthesis; L-tryptophan biosynthesis; L-tryptophan from chorismate: step 4/5. The protein is Indole-3-glycerol phosphate synthase of Paracidovorax citrulli (strain AAC00-1) (Acidovorax citrulli).